The primary structure comprises 342 residues: Oxygen-dependent coproporphyrinogen-III oxidase (342 aa).

Ser98 provides a ligand contact to substrate. The a divalent metal cation site is built by His102 and His112. His112 acts as the Proton donor in catalysis. 114–116 (NYR) lines the substrate pocket. A divalent metal cation-binding residues include His146 and His176. The tract at residues 266-301 (YVEFNLVWDRGTIFGLQTNGRTESILMSLPPLARWE) is important for dimerization.

The protein belongs to the aerobic coproporphyrinogen-III oxidase family. In terms of assembly, homodimer. The cofactor is a divalent metal cation.

The protein localises to the cytoplasm. It catalyses the reaction coproporphyrinogen III + O2 + 2 H(+) = protoporphyrinogen IX + 2 CO2 + 2 H2O. It functions in the pathway porphyrin-containing compound metabolism; protoporphyrin-IX biosynthesis; protoporphyrinogen-IX from coproporphyrinogen-III (O2 route): step 1/1. Its function is as follows. Involved in the heme and chlorophyll biosynthesis. Catalyzes the aerobic oxidative decarboxylation of propionate groups of rings A and B of coproporphyrinogen-III to yield the vinyl groups in protoporphyrinogen-IX. This Prochlorococcus marinus subsp. pastoris (strain CCMP1986 / NIES-2087 / MED4) protein is Oxygen-dependent coproporphyrinogen-III oxidase.